A 308-amino-acid polypeptide reads, in one-letter code: Peroxisomal targeting signal 2 receptor (308 aa).

WD repeat units follow at residues 57–88 (DVED…RLFD), 101–132 (EHKA…KLWL), 145–176 (GSNS…KFWD), 187–218 (EIPN…YCYD), 231–262 (GHQL…RIFD), and 274–306 (LHSE…YIWN).

It belongs to the WD repeat peroxin-7 family. Interacts with PEX21.

Its subcellular location is the cytoplasm. The protein localises to the cytosol. It is found in the peroxisome matrix. Functionally, receptor required for the peroxisomal import of proteins containing a C-terminal PTS2-type peroxisomal targeting signal, such as 3-oxoacyl-CoA thiolase. Specifically binds to cargo proteins containing a PTS2 peroxisomal targeting signal in the cytosol. Cargo protein-binding triggers interaction with PEX21 and formation of a ternary complex composed of PEX21 and PEX7 along with PTS2-containing cargo proteins, which is tranlocated into peroxisomes by passing through the PEX13-PEX14 docking complex. The polypeptide is Peroxisomal targeting signal 2 receptor (pex7) (Schizosaccharomyces pombe (strain 972 / ATCC 24843) (Fission yeast)).